A 687-amino-acid chain; its full sequence is Chloride channel protein ClC-Ka (687 aa).

The next 4 helical transmembrane spans lie at 52-72, 161-181, 202-222, and 236-256; these read FLMT…FAIG, LFLG…AYLG, VAAA…GVLF, and YWRG…LAVF. Ca(2+) contacts are provided by glutamate 259, glutamate 261, aspartate 278, and glutamate 281. Helical transmembrane passes span 282-302, 329-349, 396-416, 417-437, 452-472, and 486-506; these read IFFF…YLFC, ALAT…HFLA, FTIF…LILA, TTIP…AAIG, IVTG…AGAA, and LLAF…MAVL. The Cytoplasmic portion of the chain corresponds to 507-687; it reads AANAIAQSCQ…SNLTNPPAPK (181 aa). 2 CBS domains span residues 551–609 and 626–684; these read MNHS…EPPS and CPTE…TNPP.

The protein belongs to the chloride channel (TC 2.A.49) family. CLCNKA subfamily. As to quaternary structure, homodimer. Interacts with BSND.

It localises to the basolateral cell membrane. It carries out the reaction chloride(in) = chloride(out). The enzyme catalyses bromide(in) = bromide(out). The catalysed reaction is nitrate(in) = nitrate(out). It catalyses the reaction iodide(out) = iodide(in). Its activity is regulated as follows. Activated by extracellular Ca(2+) and inhibited by extracellular acidic pH. Its function is as follows. Anion-selective channel permeable to small monovalent anions with ion selectivity for chloride &gt; bromide &gt; nitrate &gt; iodide. Forms a homodimeric channel where each subunit has its own ion conduction pathway. May conduct double-barreled currents controlled by two types of gates, two fast gates that control each subunit independently and a slow common gate that opens and shuts off both subunits simultaneously. Assembles with the regulatory subunit BSND/Barttin for sorting at the basolateral plasma membrane domain and functional switch to the ion conducting state. CLCNKA:BSND channels display mostly a linear current-voltage relationship with fast gating at negative potentials. Mediates transepithelial chloride transport from the lumen to interstitial compartment along the thin ascending limb of Henle's loop, contributing to generation of hypertonic medullary interstitium as a countercurrent system to achieve urine concentration. Conducts chloride currents in the stria vascularis of the inner ear to establish the endocochlear potential necessary for normal hearing. This Homo sapiens (Human) protein is Chloride channel protein ClC-Ka.